Here is a 202-residue protein sequence, read N- to C-terminus: MKKSVWHHSLKGYCGRIAAVLCFSVLVPLVAMAAEGGGHGEEGTDWVNFGWRVLDFIILVGLFYWLLASKVKSFFSGRREEIKTTLEEARLAKEAAEHKFKEYSEKLDKASKEIEGVYEMIRAQGQAEKEKILEDARKAAAKMKEDTQARIEQELKKASQQLRMEAVQLSVHVAEDILKRNITPEDHQSMVKDYLDKVVRKH.

Residues 17–37 (IAAVLCFSVLVPLVAMAAEGG) traverse the membrane as a helical segment.

It belongs to the ATPase B chain family. F-type ATPases have 2 components, F(1) - the catalytic core - and F(0) - the membrane proton channel. F(1) has five subunits: alpha(3), beta(3), gamma(1), delta(1), epsilon(1). F(0) has three main subunits: a(1), b(2) and c(10-14). The alpha and beta chains form an alternating ring which encloses part of the gamma chain. F(1) is attached to F(0) by a central stalk formed by the gamma and epsilon chains, while a peripheral stalk is formed by the delta and b chains.

It is found in the cell inner membrane. F(1)F(0) ATP synthase produces ATP from ADP in the presence of a proton or sodium gradient. F-type ATPases consist of two structural domains, F(1) containing the extramembraneous catalytic core and F(0) containing the membrane proton channel, linked together by a central stalk and a peripheral stalk. During catalysis, ATP synthesis in the catalytic domain of F(1) is coupled via a rotary mechanism of the central stalk subunits to proton translocation. Functionally, component of the F(0) channel, it forms part of the peripheral stalk, linking F(1) to F(0). The sequence is that of ATP synthase subunit b 1 from Syntrophus aciditrophicus (strain SB).